We begin with the raw amino-acid sequence, 196 residues long: Histone H1.0 (196 aa).

Disordered regions lie at residues 1 to 29 (MTEN…PKYS) and 78 to 196 (SGTL…GRKK). The 74-residue stretch at 24–97 (DHPKYSDMIL…GASGSFRLAK (74 aa)) folds into the H15 domain. The span at 104–196 (PAKKPKKEIK…ASPKKSGRKK (93 aa)) shows a compositional bias: basic residues.

This sequence belongs to the histone H1/H5 family.

The protein resides in the nucleus. Its subcellular location is the chromosome. Histones H1 are necessary for the condensation of nucleosome chains into higher-order structures. The histones H1.0 are found in cells that are in terminal stages of differentiation or that have low rates of cell division. This Xenopus tropicalis (Western clawed frog) protein is Histone H1.0 (h1-0).